The chain runs to 80 residues: Protein CEBPZOS (80 aa).

The helical transmembrane segment at 15–32 (GVLVAELVGVFGAYFLFS) threads the bilayer.

It localises to the mitochondrion membrane. This chain is Protein CEBPZOS, found in Homo sapiens (Human).